A 256-amino-acid polypeptide reads, in one-letter code: Trypsinogen-like protein 3 (256 aa).

An N-terminal signal peptide occupies residues 1 to 14 (MILLLVLALGLAGA). Residues 15 to 237 (SPLGEYKECP…YNDWIHQVMA (223 aa)) enclose the Peptidase S1 domain. 6 disulfide bridges follow: Cys23–Cys153, Cys41–Cys57, Cys125–Cys226, Cys132–Cys199, Cys164–Cys180, and Cys189–Cys213.

It belongs to the peptidase S1 family.

This is Trypsinogen-like protein 3 (trp3) from Pseudopleuronectes americanus (Winter flounder).